The following is a 964-amino-acid chain: Lon protease homolog, mitochondrial (964 aa).

A Lon N-terminal domain is found at 89–300; sequence VIALPLPHRP…LTLELVKKEM (212 aa). 455–462 is an ATP binding site; it reads GPPGVGKT. The disordered stretch occupies residues 663 to 740; that stretch reads GVSNEPDHES…TSKGNKGTDG (78 aa). Positions 673-687 are enriched in polar residues; sequence VSASVTEESGNGDNT. Residues 688–698 are compositionally biased toward basic and acidic residues; sequence TTKDEILKDPA. Over residues 703-712 the composition is skewed to polar residues; that stretch reads SVTNNVTNPA. The Lon proteolytic domain occupies 773 to 957; it reads HTPVGVVMGL…SEIYDLAFQS (185 aa). Residues Ser863 and Lys906 contribute to the active site.

This sequence belongs to the peptidase S16 family. Homoheptamer. Organized in a ring with a central cavity.

It localises to the mitochondrion matrix. It carries out the reaction Hydrolysis of proteins in presence of ATP.. Its function is as follows. ATP-dependent serine protease that mediates the selective degradation of misfolded, unassembled or oxidatively damaged polypeptides as well as certain short-lived regulatory proteins in the mitochondrial matrix. May also have a chaperone function in the assembly of inner membrane protein complexes. Participates in the regulation of mitochondrial gene expression and in the maintenance of the integrity of the mitochondrial genome. Binds to mitochondrial DNA in a site-specific manner. This chain is Lon protease homolog, mitochondrial (LON2), found in Zea mays (Maize).